Reading from the N-terminus, the 196-residue chain is Cyclin-dependent kinase inhibitor 6 (196 aa).

2 disordered regions span residues 1 to 36 and 55 to 151; these read MSERKRELAEEASSTSFSPLKKTKLNDSSDSSPDSH and ASDE…RKTP. Low complexity predominate over residues 124–139; sequence SEGLGETTTEMESSSA. T152 is modified (phosphothreonine; by KIN10).

Belongs to the CDI family. ICK/KRP subfamily. In terms of assembly, specifically interacts with CDKA-1, but not with CDKB1-1. Interacts with CYCD1-1, CYCD4-1 and RHF1A. Binds to FBL17. Interacts with KIN10. Interacts with CYCD3-1. In terms of processing, ubiquitinated by RHF1A and SCF(FBL17). Ubiquitination leads to its subsequent degradation, thus controlling cell cycle progression. Post-translationally, the phosphorylation at Thr-152 by KIN10 represses its activity. As to expression, expressed in newly formed organs such as the shoot apex. Expressed in cotyledon, primary root and marginal region of the leaves as well as in developing pollen.

It localises to the nucleus. It is found in the nucleoplasm. With respect to regulation, down-regulated by KIN10 under a phosphorylation-dependent manner. Binds and inhibits CYCD2-1/CDKA-1 complex kinase activity. Regulates cell division which is crucial for plant growth, development and morphogenesis. May inhibit CDK kinases specifically involved in the G1/S phase transition. The polypeptide is Cyclin-dependent kinase inhibitor 6 (KRP6) (Arabidopsis thaliana (Mouse-ear cress)).